Consider the following 235-residue polypeptide: uncharacterized protein (235 aa).

To E.coli YbeR.

This is an uncharacterized protein from Escherichia coli (strain K12).